The sequence spans 154 residues: Endoribonuclease YbeY (154 aa).

Zn(2+) contacts are provided by His114, His118, and His124.

This sequence belongs to the endoribonuclease YbeY family. Requires Zn(2+) as cofactor.

It is found in the cytoplasm. In terms of biological role, single strand-specific metallo-endoribonuclease involved in late-stage 70S ribosome quality control and in maturation of the 3' terminus of the 16S rRNA. This chain is Endoribonuclease YbeY, found in Haemophilus influenzae (strain PittEE).